Here is a 631-residue protein sequence, read N- to C-terminus: Glutamyl-tRNA(Gln) amidotransferase subunit E (631 aa).

The protein belongs to the GatB/GatE family. GatE subfamily. As to quaternary structure, heterodimer of GatD and GatE.

The enzyme catalyses L-glutamyl-tRNA(Gln) + L-glutamine + ATP + H2O = L-glutaminyl-tRNA(Gln) + L-glutamate + ADP + phosphate + H(+). Functionally, allows the formation of correctly charged Gln-tRNA(Gln) through the transamidation of misacylated Glu-tRNA(Gln) in organisms which lack glutaminyl-tRNA synthetase. The reaction takes place in the presence of glutamine and ATP through an activated gamma-phospho-Glu-tRNA(Gln). The GatDE system is specific for glutamate and does not act on aspartate. The chain is Glutamyl-tRNA(Gln) amidotransferase subunit E from Methanococcus maripaludis (strain C5 / ATCC BAA-1333).